We begin with the raw amino-acid sequence, 213 residues long: ATP phosphoribosyltransferase (213 aa).

Belongs to the ATP phosphoribosyltransferase family. Short subfamily. In terms of assembly, heteromultimer composed of HisG and HisZ subunits.

The protein localises to the cytoplasm. It carries out the reaction 1-(5-phospho-beta-D-ribosyl)-ATP + diphosphate = 5-phospho-alpha-D-ribose 1-diphosphate + ATP. It participates in amino-acid biosynthesis; L-histidine biosynthesis; L-histidine from 5-phospho-alpha-D-ribose 1-diphosphate: step 1/9. In terms of biological role, catalyzes the condensation of ATP and 5-phosphoribose 1-diphosphate to form N'-(5'-phosphoribosyl)-ATP (PR-ATP). Has a crucial role in the pathway because the rate of histidine biosynthesis seems to be controlled primarily by regulation of HisG enzymatic activity. The chain is ATP phosphoribosyltransferase from Listeria monocytogenes serotype 4a (strain HCC23).